A 246-amino-acid chain; its full sequence is TLC domain-containing protein 2 (246 aa).

6 consecutive transmembrane segments (helical) span residues 5–25, 43–63, 79–99, 107–127, 128–148, and 199–219; these read SVILTTGSSVGFFKLVNYGLG, ISTSFVHSLITGVWSVLCFCM, SHALVSVSIGYFIYDFLDMVI, WELLFHHVVVITCFGISVLTC, RYVGFAVVALLVEINSVFLHL, and FSYTIGSVGLAIMTAMNIVLF. One can recognise a TLC domain in the interval 35–231; sequence RNAWKWNNIS…LMRSDFMKAS (197 aa).

The protein belongs to the TLCD family.

Its subcellular location is the cell membrane. Its function is as follows. Regulates the composition and fluidity of the plasma membrane. Inhibits the incorporation of membrane-fluidizing phospholipids containing omega-3 long-chain polyunsaturated fatty acids (LCPUFA) and thereby promotes membrane rigidity. Does not appear to have any effect on LCPUFA synthesis. This is TLC domain-containing protein 2 (tlcd2) from Danio rerio (Zebrafish).